Consider the following 1133-residue polypeptide: Protein cordon-bleu (1133 aa).

Positions 1–11 are enriched in pro residues; it reads MKARAPPPPGK. Positions 1–25 are disordered; the sequence is MKARAPPPPGKPAAQNVHSEQKLPH. Residues serine 31, serine 34, serine 196, serine 219, serine 256, and serine 278 each carry the phosphoserine modification. Disordered stretches follow at residues 246-393 and 442-568; these read AEHL…SVNG and QGGI…GQAS. Residues 272–301 are compositionally biased toward polar residues; the sequence is CVTTPNSPSLHSRSLTLGPSLSLGNISGMS. The KKRRAP 1 motif lies at 307–312; sequence KKRRAP. Phosphoserine occurs at positions 330 and 333. The KKRRAP 2 signature appears at 340–345; the sequence is KKRRAP. Residues 345–358 are compositionally biased toward pro residues; sequence PAPPPPQPPPPSPV. Serine 356 carries the post-translational modification Phosphoserine. Residues 361-371 show a composition bias toward basic and acidic residues; sequence NRKEDKEENRK. 2 stretches are compositionally biased toward polar residues: residues 382–393 and 442–464; these read TDTSSLTSSVNG and QGGI…QPFI. Serine 447 is modified (phosphoserine). Residues 512-524 show a composition bias toward basic and acidic residues; the sequence is STDDPKAKDKDKM. Serine 614 carries the phosphoserine modification. A disordered region spans residues 664–720; sequence APSTTITATSEKPQRDETKAGFTLTTPEQQPASQEYGAPPEEDRSRPHSAVSCPVKV. Polar residues-rich tracts occupy residues 665–674 and 686–696; these read PSTTITATSE and TLTTPEQQPAS. Serine 924 bears the Phosphoserine mark. Disordered stretches follow at residues 942–961 and 990–1018; these read PSPL…SSIF and HTSG…YVEA. 2 WH2 domains span residues 981–1001 and 1021–1041; these read LHSA…LRKT and ERSA…LRKV. Basic and acidic residues predominate over residues 993–1010; the sequence is GGRDKLRKTAEQASEGRP. Positions 1063–1091 are disordered; it reads DKPQQEDRGLPPPPALPPPSTPASQVPSA. The segment covering 1072–1083 has biased composition (pro residues); the sequence is LPPPPALPPPST. A Phosphoserine modification is found at serine 1099. In terms of domain architecture, WH2 3 spans 1109 to 1129; the sequence is ARQALMDAIRSGTGAARLRKV.

Identified in a complex composed of ACTA1, COBL, GSN AND TMSB4X. Identified in a complex composed of COBL, PACSIN1 and WASL. Interacts with PACSIN1, PACSIN2 and PACSIN3. Interacts (via WH2 domains) with actin monomers. Interacts with both PACSIN1 and DBNL. Detected in brain (at protein level).

It localises to the cell membrane. The protein resides in the cytoplasm. The protein localises to the cytoskeleton. It is found in the cell projection. Its subcellular location is the ruffle. It localises to the cytosol. In terms of biological role, plays an important role in the reorganization of the actin cytoskeleton. Binds to and sequesters actin monomers (G actin). Nucleates actin polymerization by assembling three actin monomers in cross-filament orientation and thereby promotes growth of actin filaments at the barbed end. Can also mediate actin depolymerization at barbed ends and severing of actin filaments. Promotes formation of cell ruffles. Regulates dendrite branching in Purkinje cells. Regulates neuron morphogenesis and increases branching of axons and dendrites. The chain is Protein cordon-bleu (Cobl) from Rattus norvegicus (Rat).